The chain runs to 90 residues: DNA-directed RNA polymerase subunit Rpo11 (90 aa).

Belongs to the archaeal Rpo11/eukaryotic RPB11/RPC19 RNA polymerase subunit family. In terms of assembly, part of the RNA polymerase complex.

The protein resides in the cytoplasm. It catalyses the reaction RNA(n) + a ribonucleoside 5'-triphosphate = RNA(n+1) + diphosphate. Its function is as follows. DNA-dependent RNA polymerase (RNAP) catalyzes the transcription of DNA into RNA using the four ribonucleoside triphosphates as substrates. The protein is DNA-directed RNA polymerase subunit Rpo11 of Metallosphaera sedula (strain ATCC 51363 / DSM 5348 / JCM 9185 / NBRC 15509 / TH2).